We begin with the raw amino-acid sequence, 423 residues long: Serine--tRNA ligase (423 aa).

231-233 contacts L-serine; it reads TGE. Residue 262-264 coordinates ATP; that stretch reads RSE. Residue E285 coordinates L-serine. 349–352 provides a ligand contact to ATP; the sequence is EISS. S385 provides a ligand contact to L-serine.

Belongs to the class-II aminoacyl-tRNA synthetase family. Type-1 seryl-tRNA synthetase subfamily. Homodimer. The tRNA molecule binds across the dimer.

The protein localises to the cytoplasm. It carries out the reaction tRNA(Ser) + L-serine + ATP = L-seryl-tRNA(Ser) + AMP + diphosphate + H(+). The catalysed reaction is tRNA(Sec) + L-serine + ATP = L-seryl-tRNA(Sec) + AMP + diphosphate + H(+). It participates in aminoacyl-tRNA biosynthesis; selenocysteinyl-tRNA(Sec) biosynthesis; L-seryl-tRNA(Sec) from L-serine and tRNA(Sec): step 1/1. Catalyzes the attachment of serine to tRNA(Ser). Is also able to aminoacylate tRNA(Sec) with serine, to form the misacylated tRNA L-seryl-tRNA(Sec), which will be further converted into selenocysteinyl-tRNA(Sec). The chain is Serine--tRNA ligase from Coxiella burnetii (strain CbuG_Q212) (Coxiella burnetii (strain Q212)).